Consider the following 362-residue polypeptide: Phosphoserine aminotransferase (362 aa).

An L-glutamate-binding site is contributed by Arg-43. Residues 77 to 78 (AT), Trp-103, Thr-153, Asp-173, and Gln-196 each bind pyridoxal 5'-phosphate. Lys-197 is subject to N6-(pyridoxal phosphate)lysine. Residue 238 to 239 (NT) participates in pyridoxal 5'-phosphate binding.

The protein belongs to the class-V pyridoxal-phosphate-dependent aminotransferase family. SerC subfamily. Homodimer. It depends on pyridoxal 5'-phosphate as a cofactor.

The protein resides in the cytoplasm. It carries out the reaction O-phospho-L-serine + 2-oxoglutarate = 3-phosphooxypyruvate + L-glutamate. It catalyses the reaction 4-(phosphooxy)-L-threonine + 2-oxoglutarate = (R)-3-hydroxy-2-oxo-4-phosphooxybutanoate + L-glutamate. Its pathway is amino-acid biosynthesis; L-serine biosynthesis; L-serine from 3-phospho-D-glycerate: step 2/3. It participates in cofactor biosynthesis; pyridoxine 5'-phosphate biosynthesis; pyridoxine 5'-phosphate from D-erythrose 4-phosphate: step 3/5. Catalyzes the reversible conversion of 3-phosphohydroxypyruvate to phosphoserine and of 3-hydroxy-2-oxo-4-phosphonooxybutanoate to phosphohydroxythreonine. The sequence is that of Phosphoserine aminotransferase from Xylella fastidiosa (strain 9a5c).